A 365-amino-acid chain; its full sequence is DNA replication and repair protein RecF (365 aa).

Residue 30–37 (GDNGEGKT) participates in ATP binding.

It belongs to the RecF family.

Its subcellular location is the cytoplasm. In terms of biological role, the RecF protein is involved in DNA metabolism; it is required for DNA replication and normal SOS inducibility. RecF binds preferentially to single-stranded, linear DNA. It also seems to bind ATP. The protein is DNA replication and repair protein RecF of Leptospira interrogans serogroup Icterohaemorrhagiae serovar copenhageni (strain Fiocruz L1-130).